Here is a 398-residue protein sequence, read N- to C-terminus: Phosphoglycerate kinase (398 aa).

Substrate is bound by residues 23 to 25 (DFN), Arg-38, 61 to 64 (HLGK), Arg-122, and Arg-155. ATP-binding positions include Lys-206, Gly-297, Glu-328, and 354-357 (GGDS).

The protein belongs to the phosphoglycerate kinase family. As to quaternary structure, monomer.

The protein resides in the cytoplasm. It carries out the reaction (2R)-3-phosphoglycerate + ATP = (2R)-3-phospho-glyceroyl phosphate + ADP. Its pathway is carbohydrate degradation; glycolysis; pyruvate from D-glyceraldehyde 3-phosphate: step 2/5. The polypeptide is Phosphoglycerate kinase (Clostridium kluyveri (strain NBRC 12016)).